Reading from the N-terminus, the 277-residue chain is Putative hydroxypyruvate isomerase (277 aa).

Residues Glu-150 and Glu-249 each act as proton donor/acceptor in the active site.

It belongs to the hyi family.

It catalyses the reaction 3-hydroxypyruvate = 2-hydroxy-3-oxopropanoate. Catalyzes the reversible isomerization between hydroxypyruvate and 2-hydroxy-3-oxopropanoate (also termed tartronate semialdehyde). The polypeptide is Putative hydroxypyruvate isomerase (HYI) (Homo sapiens (Human)).